The primary structure comprises 281 residues: MSDYLGAHMSIAGGLHKSVERAVAAGCGTLQIFTRSSNQWKGKPVSDKDADLFRSSFAASGLHEVISHDIYLINLAAPAGDTRDKSLAAFGDEMATCARLGINKIVMHPGSHTTDSPEAGLERVISAFDQLFEQTPEYEGLVLLETTAGQGTNLGRTFEELQTIINGSKYPDRFGICFDTCHTFAAGYNTATPEGYADVMAQFDRLLGLERLLCFHFNDSKKGLGSRVDRHEHIGQGTLGLEPFRFIMHDPRFITVPKILETPKGDDDAMDQVNLALLRSL.

9 residues coordinate Zn(2+): His68, His108, Glu145, Asp179, His182, His216, Asp229, His231, and Glu261.

The protein belongs to the AP endonuclease 2 family. The cofactor is Zn(2+).

The catalysed reaction is Endonucleolytic cleavage to 5'-phosphooligonucleotide end-products.. Endonuclease IV plays a role in DNA repair. It cleaves phosphodiester bonds at apurinic or apyrimidinic (AP) sites, generating a 3'-hydroxyl group and a 5'-terminal sugar phosphate. This Trichlorobacter lovleyi (strain ATCC BAA-1151 / DSM 17278 / SZ) (Geobacter lovleyi) protein is Probable endonuclease 4.